Here is a 246-residue protein sequence, read N- to C-terminus: Probable phosphatase PBPRB2022 (246 aa).

H8, H10, H16, H41, E74, H102, H132, D193, and H195 together coordinate Zn(2+).

This sequence belongs to the PHP family. It depends on Zn(2+) as a cofactor.

This chain is Probable phosphatase PBPRB2022, found in Photobacterium profundum (strain SS9).